A 109-amino-acid chain; its full sequence is U4-lycotoxin-Ls1a (109 aa).

The signal sequence occupies residues 1–22 (MKVLVLFSVLFLTLFSYSSTEA). The propeptide occupies 23 to 44 (IDEFDSDAEDDMLSLMANEQVR). The segment at 45-88 (AKACTPRLHDCSHDRHSCCRGELFKDVCYCFYPEGEDKTEVCSC) is knottin domain. Disulfide bonds link C48/C63, C55/C72, C62/C88, and C74/C86. The segment at 89 to 108 (QQPKSHKYIEKVVDKAKTVV) is linear cationic cytotoxin domain.

It belongs to the neurotoxin 19 (CSTX) family. 05 (U4-Lctx) subfamily. In terms of tissue distribution, expressed by the venom gland.

It localises to the secreted. Its function is as follows. Enhances the high-affinity desensitization of human P2RX3 purinoceptors. This is U4-lycotoxin-Ls1a from Lycosa singoriensis (Wolf spider).